Reading from the N-terminus, the 200-residue chain is Pyridoxal 5'-phosphate synthase subunit PdxT (200 aa).

Residue 52 to 54 (GES) coordinates L-glutamine. The Nucleophile role is filled by Cys84. Residues Arg115 and 143-144 (IR) contribute to the L-glutamine site. Active-site charge relay system residues include His179 and Glu181.

It belongs to the glutaminase PdxT/SNO family. In terms of assembly, in the presence of PdxS, forms a dodecamer of heterodimers. Only shows activity in the heterodimer.

The enzyme catalyses aldehydo-D-ribose 5-phosphate + D-glyceraldehyde 3-phosphate + L-glutamine = pyridoxal 5'-phosphate + L-glutamate + phosphate + 3 H2O + H(+). It catalyses the reaction L-glutamine + H2O = L-glutamate + NH4(+). Its pathway is cofactor biosynthesis; pyridoxal 5'-phosphate biosynthesis. Its function is as follows. Catalyzes the hydrolysis of glutamine to glutamate and ammonia as part of the biosynthesis of pyridoxal 5'-phosphate. The resulting ammonia molecule is channeled to the active site of PdxS. This is Pyridoxal 5'-phosphate synthase subunit PdxT from Methanosarcina barkeri (strain Fusaro / DSM 804).